A 445-amino-acid chain; its full sequence is Phosphoglucosamine mutase (445 aa).

Ser102 acts as the Phosphoserine intermediate in catalysis. Positions 102, 241, 243, and 245 each coordinate Mg(2+). Ser102 is modified (phosphoserine).

It belongs to the phosphohexose mutase family. Requires Mg(2+) as cofactor. Activated by phosphorylation.

It carries out the reaction alpha-D-glucosamine 1-phosphate = D-glucosamine 6-phosphate. In terms of biological role, catalyzes the conversion of glucosamine-6-phosphate to glucosamine-1-phosphate. In Escherichia coli O81 (strain ED1a), this protein is Phosphoglucosamine mutase.